Reading from the N-terminus, the 69-residue chain is Large ribosomal subunit protein bL31 (69 aa).

4 residues coordinate Zn(2+): Cys17, Cys19, Cys37, and Cys40.

Belongs to the bacterial ribosomal protein bL31 family. Type A subfamily. In terms of assembly, part of the 50S ribosomal subunit. It depends on Zn(2+) as a cofactor.

Binds the 23S rRNA. This Caldicellulosiruptor saccharolyticus (strain ATCC 43494 / DSM 8903 / Tp8T 6331) protein is Large ribosomal subunit protein bL31.